We begin with the raw amino-acid sequence, 460 residues long: Methylenetetrahydrofolate--tRNA-(uracil-5-)-methyltransferase TrmFO (460 aa).

12 to 17 (GGGLAG) contributes to the FAD binding site.

It belongs to the MnmG family. TrmFO subfamily. The cofactor is FAD.

Its subcellular location is the cytoplasm. The enzyme catalyses uridine(54) in tRNA + (6R)-5,10-methylene-5,6,7,8-tetrahydrofolate + NADH + H(+) = 5-methyluridine(54) in tRNA + (6S)-5,6,7,8-tetrahydrofolate + NAD(+). It carries out the reaction uridine(54) in tRNA + (6R)-5,10-methylene-5,6,7,8-tetrahydrofolate + NADPH + H(+) = 5-methyluridine(54) in tRNA + (6S)-5,6,7,8-tetrahydrofolate + NADP(+). Its function is as follows. Catalyzes the folate-dependent formation of 5-methyl-uridine at position 54 (M-5-U54) in all tRNAs. This Crocosphaera subtropica (strain ATCC 51142 / BH68) (Cyanothece sp. (strain ATCC 51142)) protein is Methylenetetrahydrofolate--tRNA-(uracil-5-)-methyltransferase TrmFO.